The chain runs to 1169 residues: Polyamine-transporting ATPase 13A2 (1169 aa).

The Cytoplasmic segment spans residues 1–44; the sequence is MSADSSLLMGSTPPSYGTLTTGTSIDPLSSSASSVRLSGYCGSP. Residues 45–65 lie within the membrane without spanning it; it reads WRAIGYHAAVWMLAGIPWLLF. Residues 66–225 lie on the Cytoplasmic side of the membrane; the sequence is RWKPLWGVRL…ISIPVKSYLQ (160 aa). The chain crosses the membrane as a helical span at residues 226–246; sequence LLADEALNPYYGFQAFSIALW. Residues 247 to 250 are Lumenal-facing; it reads LADH. A helical membrane pass occupies residues 251-271; the sequence is YYWYALCIFLISAISICLALY. Topologically, residues 272–422 are cytoplasmic; sequence KTRKQSLTLR…SFKFYKHSMK (151 aa). Residues 423 to 443 form a helical membrane-spanning segment; it reads FVAALSVLALLGTVYSIIILY. Residues 444 to 458 are Lumenal-facing; that stretch reads RNRVPVREIVIRALD. The chain crosses the membrane as a helical span at residues 459 to 479; that stretch reads LVTVVVPPALPAAMTVCTLYA. The Cytoplasmic portion of the chain corresponds to 480–919; sequence QSRLRTQGIF…REGRCSLDTS (440 aa). D508 serves as the catalytic 4-aspartylphosphate intermediate. Residues D867 and D871 each contribute to the Mg(2+) site. A helical transmembrane segment spans residues 920–940; sequence FSVFKYMALYSLTQFISVLIL. Residues 941-946 are Lumenal-facing; it reads YTINTN. The helical transmembrane segment at 947–967 threads the bilayer; it reads LGDLQFLAIDLVITTTVAVLM. Over 968 to 993 the chain is Cytoplasmic; the sequence is SRTGPALTLVRARPPGALLSVPVLGS. The helical transmembrane segment at 994–1014 threads the bilayer; the sequence is LLLQVALVAGIQLGGYFLVIA. Topologically, residues 1015–1037 are lumenal; sequence QPWFVPLNRTVPAPDNLPNYENT. N1022 carries N-linked (GlcNAc...) asparagine glycosylation. A helical membrane pass occupies residues 1038–1058; the sequence is VVFSLSGFQYLILAAAVSKGA. The Cytoplasmic portion of the chain corresponds to 1059–1069; the sequence is PFRQPLYTNVP. Residues 1070-1090 traverse the membrane as a helical segment; the sequence is FLVALALLGSVLVGLILVPGL. Residues 1091 to 1106 are Lumenal-facing; the sequence is LQGPLGLRNIVDSSFK. Residues 1107–1127 form a helical membrane-spanning segment; that stretch reads LLLLGLVAFNFVGAFMLESVL. Topologically, residues 1128 to 1169 are cytoplasmic; the sequence is DQCLPACLRWLRPKRASKKQFKRLQQELAEHPWPTLPVGSVR.

The protein belongs to the cation transport ATPase (P-type) (TC 3.A.3) family. Type V subfamily. Interacts with MYCBP2; the interaction inhibits the ubiquitination of TSC2 by MYCBP2. Interacts with HDAC6; the interaction results in recruitment of HDAC6 to lysosomes to promote CTTN deacetylation. Autophosphorylated. Accumulates in an inactive autophosphorylated state and autophosphorylation is stimulated by phosphatidic acid and phosphatidylinositol 3,5-bisphosphate but not by Mn(2+) or Zn(2+). The presence of spermine results in a dose-dependent reduction in autophosphorylation.

The protein resides in the lysosome membrane. Its subcellular location is the late endosome membrane. It is found in the endosome. The protein localises to the multivesicular body membrane. It localises to the cytoplasmic vesicle. The protein resides in the autophagosome membrane. The enzyme catalyses spermidine(out) + ATP + H2O = spermidine(in) + ADP + phosphate + H(+). It catalyses the reaction spermine(out) + ATP + H2O = spermine(in) + ADP + phosphate + H(+). Its activity is regulated as follows. Accumulates in an inactive autophosphorylated state. The presence of spermine results in a dose-dependent reduction in autophosphorylation. Its function is as follows. ATPase which acts as a lysosomal polyamine exporter with high affinity for spermine. Also stimulates cellular uptake of polyamines and protects against polyamine toxicity. Plays a role in intracellular cation homeostasis and the maintenance of neuronal integrity. Contributes to cellular zinc homeostasis. Confers cellular protection against Mn(2+) and Zn(2+) toxicity and mitochondrial stress. Required for proper lysosomal and mitochondrial maintenance. Regulates the autophagy-lysosome pathway through the control of SYT11 expression at both transcriptional and post-translational levels. Facilitates recruitment of deacetylase HDAC6 to lysosomes to deacetylate CTTN, leading to actin polymerization, promotion of autophagosome-lysosome fusion and completion of autophagy. Promotes secretion of exosomes as well as secretion of SCNA via exosomes. Plays a role in lipid homeostasis. This is Polyamine-transporting ATPase 13A2 from Mus musculus (Mouse).